Consider the following 171-residue polypeptide: Probable chorismate pyruvate-lyase (171 aa).

Residues M36, R78, L116, and E157 each contribute to the substrate site.

It belongs to the UbiC family.

The protein resides in the cytoplasm. The catalysed reaction is chorismate = 4-hydroxybenzoate + pyruvate. The protein operates within cofactor biosynthesis; ubiquinone biosynthesis. Removes the pyruvyl group from chorismate, with concomitant aromatization of the ring, to provide 4-hydroxybenzoate (4HB) for the ubiquinone pathway. The chain is Probable chorismate pyruvate-lyase from Bartonella henselae (strain ATCC 49882 / DSM 28221 / CCUG 30454 / Houston 1) (Rochalimaea henselae).